Reading from the N-terminus, the 305-residue chain is UDP-3-O-acyl-N-acetylglucosamine deacetylase (305 aa).

Zn(2+) contacts are provided by His78, His237, and Asp241. The active-site Proton donor is the His264.

It belongs to the LpxC family. Zn(2+) is required as a cofactor.

It carries out the reaction a UDP-3-O-[(3R)-3-hydroxyacyl]-N-acetyl-alpha-D-glucosamine + H2O = a UDP-3-O-[(3R)-3-hydroxyacyl]-alpha-D-glucosamine + acetate. It participates in glycolipid biosynthesis; lipid IV(A) biosynthesis; lipid IV(A) from (3R)-3-hydroxytetradecanoyl-[acyl-carrier-protein] and UDP-N-acetyl-alpha-D-glucosamine: step 2/6. Functionally, catalyzes the hydrolysis of UDP-3-O-myristoyl-N-acetylglucosamine to form UDP-3-O-myristoylglucosamine and acetate, the committed step in lipid A biosynthesis. The chain is UDP-3-O-acyl-N-acetylglucosamine deacetylase from Cupriavidus metallidurans (strain ATCC 43123 / DSM 2839 / NBRC 102507 / CH34) (Ralstonia metallidurans).